Consider the following 437-residue polypeptide: Ribulose bisphosphate carboxylase/oxygenase activase, chloroplastic (437 aa).

Positions 1–10 (MATAVSTIGS) are enriched in polar residues. The interval 1–26 (MATAVSTIGSVNRAPPNLNGSSSSAS) is disordered. 165-172 (GGKGQGKS) is an ATP binding site.

Belongs to the RuBisCO activase family.

The protein localises to the plastid. Its subcellular location is the chloroplast stroma. Activation of RuBisCO (ribulose-1,5-bisphosphate carboxylase/oxygenase; EC 4.1.1.39) involves the ATP-dependent carboxylation of the epsilon-amino group of lysine leading to a carbamate structure. This chain is Ribulose bisphosphate carboxylase/oxygenase activase, chloroplastic (RCA), found in Malus domestica (Apple).